Consider the following 104-residue polypeptide: Protein U9 (104 aa).

A helical membrane pass occupies residues 37 to 54; that stretch reads GVQGLNADCSYVKSQCIK.

It localises to the host membrane. The polypeptide is Protein U9 (U9) (Human herpesvirus 6B (HHV-6 variant B)).